The chain runs to 258 residues: 6-phosphogluconolactonase (258 aa).

Ala2 bears the N-acetylalanine mark. At Ser49 the chain carries Phosphoserine. The residue at position 180 (Lys180) is an N6-acetyllysine.

Belongs to the glucosamine/galactosamine-6-phosphate isomerase family. 6-phosphogluconolactonase subfamily.

It localises to the cytoplasm. The catalysed reaction is 6-phospho-D-glucono-1,5-lactone + H2O = 6-phospho-D-gluconate + H(+). It participates in carbohydrate degradation; pentose phosphate pathway; D-ribulose 5-phosphate from D-glucose 6-phosphate (oxidative stage): step 2/3. Its function is as follows. Hydrolysis of 6-phosphogluconolactone to 6-phosphogluconate. The protein is 6-phosphogluconolactonase (PGLS) of Bos taurus (Bovine).